The chain runs to 589 residues: ABC transporter G family member 8 (589 aa).

Positions Leu-16–Pro-261 constitute an ABC transporter domain. Gly-62–Ser-69 provides a ligand contact to ATP. In terms of domain architecture, ABC transmembrane type-2 spans Thr-311–Tyr-521. 7 helical membrane-spanning segments follow: residues Ala-335–Gly-355, Met-365–Ile-385, Val-412–Ile-432, Phe-441–Phe-461, Ile-470–Phe-490, Tyr-499–Asn-519, and Phe-560–Leu-580.

This sequence belongs to the ABC transporter superfamily. ABCG family. Eye pigment precursor importer (TC 3.A.1.204) subfamily.

Its subcellular location is the membrane. The chain is ABC transporter G family member 8 (ABCG8) from Arabidopsis thaliana (Mouse-ear cress).